A 446-amino-acid chain; its full sequence is Radical S-adenosyl methionine domain-containing protein 1, mitochondrial (446 aa).

The Radical SAM core domain occupies 15 to 277 (KGYNKLKDLP…VCEAEAMGFQ (263 aa)). Residues C34, C38, and C41 each coordinate [4Fe-4S] cluster. S-adenosyl-L-methionine contacts are provided by residues G94, 95-96 (GT), E130, Q159, R171, and D195.

This sequence belongs to the anaerobic coproporphyrinogen-III oxidase family. HemW subfamily.

It is found in the mitochondrion. May be a heme chaperone, appears to bind heme. Homologous bacterial proteins do not have oxygen-independent coproporphyrinogen-III oxidase activity. Binds 1 [4Fe-4S] cluster. The cluster is coordinated with 3 cysteines and an exchangeable S-adenosyl-L-methionine. The sequence is that of Radical S-adenosyl methionine domain-containing protein 1, mitochondrial (rsad1) from Dictyostelium discoideum (Social amoeba).